Reading from the N-terminus, the 280-residue chain is Succinate dehydrogenase [ubiquinone] iron-sulfur subunit, mitochondrial (280 aa).

The transit peptide at 1 to 28 directs the protein to the mitochondrion; the sequence is MAAVVAVSLKRWFPATTLGGACLQACRG. In terms of domain architecture, 2Fe-2S ferredoxin-type spans 40 to 131; the sequence is KKFAIYRWDP…DKVSKIYPLP (92 aa). 2 positions are modified to N6-acetyllysine: Lys51 and Lys55. 4 residues coordinate [2Fe-2S] cluster: Cys93, Cys98, Cys101, and Cys113. The interval 146–218 is interaction with SDHAF1; it reads FYAQYKSIEP…PAVLMQAYRW (73 aa). Positions 176 to 206 constitute a 4Fe-4S ferredoxin-type domain; the sequence is EREKLDGLYECILCACCSTSCPSYWWNGDKY. [4Fe-4S] cluster is bound by residues Cys186, Cys189, and Cys192. Cys196 lines the [3Fe-4S] cluster pocket. A ubiquinone is bound at residue Trp201. [3Fe-4S] cluster-binding residues include Cys243 and Cys249. Residue Cys253 coordinates [4Fe-4S] cluster.

This sequence belongs to the succinate dehydrogenase/fumarate reductase iron-sulfur protein family. In terms of assembly, component of complex II composed of four subunits: the flavoprotein (FP) SDHA, iron-sulfur protein (IP) SDHB, and a cytochrome b560 composed of SDHC and SDHD. Interacts with SDHAF1; the interaction is required for iron-sulfur cluster incorporation into SDHB. [2Fe-2S] cluster serves as cofactor. The cofactor is [3Fe-4S] cluster. [4Fe-4S] cluster is required as a cofactor.

Its subcellular location is the mitochondrion inner membrane. It carries out the reaction a quinone + succinate = fumarate + a quinol. The catalysed reaction is (R)-malate + a quinone = enol-oxaloacetate + a quinol. The enzyme catalyses (S)-malate + a quinone = enol-oxaloacetate + a quinol. It participates in carbohydrate metabolism; tricarboxylic acid cycle; fumarate from succinate (eukaryal route): step 1/1. Its activity is regulated as follows. Enol-oxaloacetate inhibits the succinate dehydrogenase activity. Functionally, iron-sulfur protein (IP) subunit of the succinate dehydrogenase complex (mitochondrial respiratory chain complex II), responsible for transferring electrons from succinate to ubiquinone (coenzyme Q). SDH also oxidizes malate to the non-canonical enol form of oxaloacetate, enol-oxaloacetate. Enol-oxaloacetate, which is a potent inhibitor of the succinate dehydrogenase activity, is further isomerized into keto-oxaloacetate. The polypeptide is Succinate dehydrogenase [ubiquinone] iron-sulfur subunit, mitochondrial (SDHB) (Sus scrofa (Pig)).